The primary structure comprises 100 residues: Nucleoid-associated protein jhp_0031 (100 aa).

This sequence belongs to the YbaB/EbfC family. As to quaternary structure, homodimer.

The protein localises to the cytoplasm. It is found in the nucleoid. Functionally, binds to DNA and alters its conformation. May be involved in regulation of gene expression, nucleoid organization and DNA protection. This Helicobacter pylori (strain J99 / ATCC 700824) (Campylobacter pylori J99) protein is Nucleoid-associated protein jhp_0031.